We begin with the raw amino-acid sequence, 376 residues long: Fibromodulin (376 aa).

The N-terminal stretch at 1 to 18 (MQWTSLLLLAGLFSLSQA) is a signal peptide. A Pyrrolidone carboxylic acid modification is found at Gln-19. A sulfotyrosine mark is found at Tyr-20, Tyr-38, Tyr-39, Tyr-45, Tyr-47, Tyr-53, and Tyr-55. One can recognise an LRRNT domain in the interval 67-105 (SPSPPDPRDCPQECDCPPNFPTAMYCDNRNLKYLPFVPS). LRR repeat units follow at residues 106 to 127 (RMKY…VFDN), 130 to 151 (GLLW…RKVF), 156 to 176 (HLER…PLPR), 177 to 198 (SLRE…ALEG), 201 to 222 (NLTA…MRGL), 224 to 245 (SLIL…LPSA), 246 to 266 (LEQL…YFRG), and 269 to 289 (KLLY…ASNT). N-linked (GlcNAc...) (keratan sulfate) asparagine glycosylation occurs at Asn-127. The N-linked (GlcNAc...) (keratan sulfate) asparagine glycan is linked to Asn-166. A glycan (N-linked (GlcNAc...) (keratan sulfate) asparagine) is linked at Asn-201. Asn-291 carries an N-linked (GlcNAc...) (keratan sulfate) asparagine glycan. LRR repeat units follow at residues 294-315 (SLLE…NTNL) and 316-335 (ENLY…SFCT). Residues Cys-334 and Cys-367 are joined by a disulfide bond. The N-linked (GlcNAc...) asparagine glycan is linked to Asn-341. Residues 344-365 (KLQVLRLDGNEIKRSAMPADAP) form an LRR 11 repeat.

The protein belongs to the small leucine-rich proteoglycan (SLRP) family. SLRP class II subfamily. Binds to type I and type II collagen. Post-translationally, binds keratan sulfate chains.

The protein localises to the secreted. It is found in the extracellular space. The protein resides in the extracellular matrix. Affects the rate of fibrils formation. May have a primary role in collagen fibrillogenesis. The sequence is that of Fibromodulin (FMOD) from Homo sapiens (Human).